The sequence spans 97 residues: Large ribosomal subunit protein uL23 (97 aa).

It belongs to the universal ribosomal protein uL23 family. As to quaternary structure, part of the 50S ribosomal subunit. Contacts protein L29, and trigger factor when it is bound to the ribosome.

One of the early assembly proteins it binds 23S rRNA. One of the proteins that surrounds the polypeptide exit tunnel on the outside of the ribosome. Forms the main docking site for trigger factor binding to the ribosome. In Brucella suis (strain ATCC 23445 / NCTC 10510), this protein is Large ribosomal subunit protein uL23.